Consider the following 854-residue polypeptide: DNA mismatch repair protein MutS (854 aa).

614–621 (GPNMGGKS) serves as a coordination point for ATP.

It belongs to the DNA mismatch repair MutS family.

In terms of biological role, this protein is involved in the repair of mismatches in DNA. It is possible that it carries out the mismatch recognition step. This protein has a weak ATPase activity. This chain is DNA mismatch repair protein MutS, found in Sodalis glossinidius (strain morsitans).